The following is a 229-amino-acid chain: Protein FAM3C (229 aa).

An N-terminal signal peptide occupies residues 1–24 (MRIAGAIKFVVAVALFLLTFYVIS). 2 cysteine pairs are disulfide-bonded: Cys59/Cys87 and Cys65/Cys222. One can recognise a GG-type lectin domain in the interval 68–226 (KHFAFKIASG…VEMEGCIPQK (159 aa)).

The protein belongs to the FAM3 family. As to expression, expressed in the retinal ganglion cell layer.

The protein resides in the secreted. Involved in retinal laminar formation. The protein is Protein FAM3C (fam3c) of Xenopus laevis (African clawed frog).